The following is a 248-amino-acid chain: Small ribosomal subunit protein uS3 (248 aa).

Positions 38-106 (IREFLSKGLD…QVALNILEVK (69 aa)) constitute a KH type-2 domain. The segment covering 214-230 (SEINAPAERRGRGDRNA) has biased composition (basic and acidic residues). The disordered stretch occupies residues 214–248 (SEINAPAERRGRGDRNARPRRGGQRRQRAEQKQEG).

Belongs to the universal ribosomal protein uS3 family. As to quaternary structure, part of the 30S ribosomal subunit. Forms a tight complex with proteins S10 and S14.

Its function is as follows. Binds the lower part of the 30S subunit head. Binds mRNA in the 70S ribosome, positioning it for translation. This Corynebacterium glutamicum (strain R) protein is Small ribosomal subunit protein uS3.